The sequence spans 329 residues: 4-hydroxythreonine-4-phosphate dehydrogenase (329 aa).

Residues His136 and Thr137 each contribute to the substrate site. A divalent metal cation is bound by residues His166, His211, and His266. The substrate site is built by Lys274, Asn283, and Arg292.

Belongs to the PdxA family. As to quaternary structure, homodimer. Zn(2+) serves as cofactor. The cofactor is Mg(2+). Co(2+) is required as a cofactor.

The protein localises to the cytoplasm. The enzyme catalyses 4-(phosphooxy)-L-threonine + NAD(+) = 3-amino-2-oxopropyl phosphate + CO2 + NADH. Its pathway is cofactor biosynthesis; pyridoxine 5'-phosphate biosynthesis; pyridoxine 5'-phosphate from D-erythrose 4-phosphate: step 4/5. Functionally, catalyzes the NAD(P)-dependent oxidation of 4-(phosphooxy)-L-threonine (HTP) into 2-amino-3-oxo-4-(phosphooxy)butyric acid which spontaneously decarboxylates to form 3-amino-2-oxopropyl phosphate (AHAP). The sequence is that of 4-hydroxythreonine-4-phosphate dehydrogenase from Salmonella typhimurium (strain LT2 / SGSC1412 / ATCC 700720).